Reading from the N-terminus, the 678-residue chain is Alpha-L-arabinofuranosidase 1 (678 aa).

Residues 1-33 form the signal peptide; the sequence is MDMESWKLLRSVCVLSFLLGSCFVYQSLRVVDA. The region spanning 152-239 is the CBM-cenC domain; it reads NIEEGKKYKV…WIDQVSAMPV (88 aa). Asparagine 181, asparagine 362, asparagine 523, and asparagine 555 each carry an N-linked (GlcNAc...) asparagine glycan.

The protein belongs to the glycosyl hydrolase 51 family. As to expression, expressed in roots, leaves, flowers, stems, siliques and seedlings. Observed in zones of cell proliferation, the vascular system and floral abscission zones. Expressed in the guard cells in stems, in xylem vessels and parenchyma cells surrounding the vessels, in the cambium and in the phloem, but not in the secondary xylem.

The protein resides in the secreted. Its subcellular location is the extracellular space. It localises to the extracellular matrix. The enzyme catalyses Hydrolysis of terminal non-reducing alpha-L-arabinofuranoside residues in alpha-L-arabinosides.. May be involved in the coordinated dissolution of the cell wall matrix during abscission and in the secondary cell wall formation in xylem vessels. Prefers arabinoxylan, but may also use pectic arabinans as substrates. This is Alpha-L-arabinofuranosidase 1 (ASD1) from Arabidopsis thaliana (Mouse-ear cress).